The sequence spans 528 residues: Importin subunit alpha-2 (528 aa).

Residues 1–15 show a composition bias toward low complexity; it reads MADDSASPSPSSASP. Residues 1–36 are disordered; sequence MADDSASPSPSSASPLQHHREALKSSVRNTAASRRR. ARM repeat units lie at residues 125–165, 167–206, 209–248, 253–292, 294–335, 338–383, 386–425, and 438–477; these read VPLV…NIAA, EPEE…NVAG, AELR…NLIK, KAAN…YLSA, SDRG…NLIA, DYMV…NIAA, FEHK…NLCV, and VEHL…LVMR.

It belongs to the importin alpha family. As to quaternary structure, forms a complex with importin subunit beta-1. The whole complex, most stable and composed of importin alpha, importin beta and NLS substrate, is referred to as PTAC or pore targeting complex. As to expression, expressed in root, callus, and etiolated leaf. Low expression in green leaf.

The protein resides in the cytoplasm. The protein localises to the perinuclear region. Functionally, binds specifically and directly to substrates containing either a simple or bipartite NLS motif. Promotes docking of import substrates to the nuclear envelope. In Oryza sativa subsp. japonica (Rice), this protein is Importin subunit alpha-2.